Here is a 38-residue protein sequence, read N- to C-terminus: Alpha-conotoxin LvIC (38 aa).

The propeptide occupies 1 to 21 (SNGRNAAAGDKPSYWITLAIT). Intrachain disulfides connect C23–C29 and C24–C34. Q35 carries the post-translational modification Glutamine amide.

Belongs to the conotoxin A superfamily. In terms of processing, the two analogs ([DelQ14]LvIC and [D1G,DelQ14]LvIC) are amidated at their N-terminal Cys. In terms of tissue distribution, expressed by the venom gland.

The protein resides in the secreted. In terms of biological role, alpha-conotoxins bind to the nicotinic acetylcholine receptors (nAChR) and inhibit them. This synthetic peptide inhibits rat alpha-6/alpha-3-beta-4 nAChR (IC(50)=3.3 uM). The polypeptide is Alpha-conotoxin LvIC (Conus lividus (Livid cone)).